The following is a 25-amino-acid chain: Toxin Tpa3 (25 aa).

It belongs to the non-disulfide-bridged peptide (NDBP) superfamily. Expressed by the venom gland.

It localises to the secreted. Unknown. Is not toxic to mammals. This chain is Toxin Tpa3, found in Tityus pachyurus (Colombian scorpion).